The primary structure comprises 164 residues: MSGPALTHIDSAGEASMVDVGDKTETVRVAVAEGFVRMKPETLALIREGNAKKGDVIATARLAGIMAAKQTSSLIPLCHPLMLTKVSVEIAPDDALPGLRVEAMAKLTGRTGVEMEALTAVSVACLTIYDMAKAADRDMEIGGVRLVSKSGGRSGDYRREGDMR.

Residues 77–79 and 115–116 contribute to the substrate site; these read LCH and ME. Residue Asp130 is part of the active site.

The protein belongs to the MoaC family. In terms of assembly, homohexamer; trimer of dimers.

The enzyme catalyses (8S)-3',8-cyclo-7,8-dihydroguanosine 5'-triphosphate = cyclic pyranopterin phosphate + diphosphate. It participates in cofactor biosynthesis; molybdopterin biosynthesis. In terms of biological role, catalyzes the conversion of (8S)-3',8-cyclo-7,8-dihydroguanosine 5'-triphosphate to cyclic pyranopterin monophosphate (cPMP). This chain is Cyclic pyranopterin monophosphate synthase, found in Sinorhizobium medicae (strain WSM419) (Ensifer medicae).